The following is a 632-amino-acid chain: Golgin subfamily A member 8N (632 aa).

Residues 1 to 76 (MAEETQHNKL…TSSATLKDLE (76 aa)) form a disordered region. Positions 38 to 50 (TNGSIPETATSGG) are enriched in polar residues. Coiled coils occupy residues 85–150 (VLDS…TDLY) and 209–421 (ELEQ…SLMA). 3 disordered regions span residues 423–445 (PGEGHGGEHLDSEGEEAPQPMPS), 505–524 (DAALGGGHHQAGAQGGDEGE), and 552–573 (NSADEPGPGAPAPQELGAADKH). A compositionally biased stretch (gly residues) spans 508–520 (LGGGHHQAGAQGG).

It belongs to the GOLGA8 family.

The sequence is that of Golgin subfamily A member 8N from Homo sapiens (Human).